The primary structure comprises 156 residues: Small ribosomal subunit protein uS7 (156 aa).

This sequence belongs to the universal ribosomal protein uS7 family. As to quaternary structure, part of the 30S ribosomal subunit. Contacts proteins S9 and S11.

Its function is as follows. One of the primary rRNA binding proteins, it binds directly to 16S rRNA where it nucleates assembly of the head domain of the 30S subunit. Is located at the subunit interface close to the decoding center, probably blocks exit of the E-site tRNA. This chain is Small ribosomal subunit protein uS7, found in Methylibium petroleiphilum (strain ATCC BAA-1232 / LMG 22953 / PM1).